Here is a 263-residue protein sequence, read N- to C-terminus: HTH-type transcriptional repressor NanR (263 aa).

The disordered stretch occupies residues 1–22 (MGLMNAFDSQTEDSSPAIGRNL). Positions 30–98 (KKLSEMVEEE…NGERARVSRP (69 aa)) constitute an HTH gntR-type domain. Residues 58-77 (ERELMAFFNVGRPSVREALA) constitute a DNA-binding region (H-T-H motif).

This sequence belongs to the NanR family.

In terms of biological role, transcriptional repressor that controls expression of the genes required for the catabolism of sialic acids. The sequence is that of HTH-type transcriptional repressor NanR from Shigella boydii serotype 4 (strain Sb227).